Consider the following 416-residue polypeptide: Geranyl diphosphate synthase (416 aa).

Residues Asp-157 and Asp-161 each coordinate Mg(2+). The short motif at 157 to 161 (DDIMD) is the DDXXD motif element.

The protein belongs to the FPP/GGPP synthase family. It depends on Mg(2+) as a cofactor. As to expression, specifically expressed in the anterior midgut of male beetles, the site of aggregation pheromone biosynthesis.

The enzyme catalyses isopentenyl diphosphate + dimethylallyl diphosphate = (2E)-geranyl diphosphate + diphosphate. Its pathway is pheromone biosynthesis. In terms of biological role, geranyl diphosphate synthase involved in pheromone biosynthesis. The chain is Geranyl diphosphate synthase from Ips pini (Pine engraver beetle).